Consider the following 128-residue polypeptide: Phosphoribosyl-AMP cyclohydrolase (128 aa).

Position 77 (D77) interacts with Mg(2+). Zn(2+) is bound at residue C78. Mg(2+)-binding residues include D79 and D81. Zn(2+)-binding residues include C95 and C102.

It belongs to the PRA-CH family. Homodimer. It depends on Mg(2+) as a cofactor. The cofactor is Zn(2+).

It is found in the cytoplasm. The catalysed reaction is 1-(5-phospho-beta-D-ribosyl)-5'-AMP + H2O = 1-(5-phospho-beta-D-ribosyl)-5-[(5-phospho-beta-D-ribosylamino)methylideneamino]imidazole-4-carboxamide. Its pathway is amino-acid biosynthesis; L-histidine biosynthesis; L-histidine from 5-phospho-alpha-D-ribose 1-diphosphate: step 3/9. Its function is as follows. Catalyzes the hydrolysis of the adenine ring of phosphoribosyl-AMP. The sequence is that of Phosphoribosyl-AMP cyclohydrolase from Methylococcus capsulatus (strain ATCC 33009 / NCIMB 11132 / Bath).